The chain runs to 380 residues: Chaperone protein DnaJ (380 aa).

A J domain is found at 5-72 (DFYEVLGVAK…NKRAAYDQYG (68 aa)). Residues 140–218 (GKDAQIRIPS…CGGQGKVKRQ (79 aa)) form a CR-type zinc finger. Cysteine 153, cysteine 156, cysteine 170, cysteine 173, cysteine 192, cysteine 195, cysteine 206, and cysteine 209 together coordinate Zn(2+). CXXCXGXG motif repeat units lie at residues 153 to 160 (CDTCHGSG), 170 to 177 (CTTCNGMG), 192 to 199 (CPHCRGTG), and 206 to 213 (CTSCGGQG). The segment at 359 to 380 (KGGAKHSPSGESWTDRLKSFFS) is disordered. A compositionally biased stretch (basic and acidic residues) spans 371 to 380 (WTDRLKSFFS).

It belongs to the DnaJ family. Homodimer. It depends on Zn(2+) as a cofactor.

The protein resides in the cytoplasm. Participates actively in the response to hyperosmotic and heat shock by preventing the aggregation of stress-denatured proteins and by disaggregating proteins, also in an autonomous, DnaK-independent fashion. Unfolded proteins bind initially to DnaJ; upon interaction with the DnaJ-bound protein, DnaK hydrolyzes its bound ATP, resulting in the formation of a stable complex. GrpE releases ADP from DnaK; ATP binding to DnaK triggers the release of the substrate protein, thus completing the reaction cycle. Several rounds of ATP-dependent interactions between DnaJ, DnaK and GrpE are required for fully efficient folding. Also involved, together with DnaK and GrpE, in the DNA replication of plasmids through activation of initiation proteins. This chain is Chaperone protein DnaJ, found in Delftia acidovorans (strain DSM 14801 / SPH-1).